A 959-amino-acid polypeptide reads, in one-letter code: Isoleucine--tRNA ligase (959 aa).

Positions 66 to 76 (PYANGDIHIGH) match the 'HIGH' region motif. E592 provides a ligand contact to L-isoleucyl-5'-AMP. Residues 633-637 (KMSKS) carry the 'KMSKS' region motif. K636 contributes to the ATP binding site. 4 residues coordinate Zn(2+): C922, C925, C942, and C945.

It belongs to the class-I aminoacyl-tRNA synthetase family. IleS type 1 subfamily. As to quaternary structure, monomer. Zn(2+) serves as cofactor.

The protein resides in the cytoplasm. It carries out the reaction tRNA(Ile) + L-isoleucine + ATP = L-isoleucyl-tRNA(Ile) + AMP + diphosphate. Its function is as follows. Catalyzes the attachment of isoleucine to tRNA(Ile). As IleRS can inadvertently accommodate and process structurally similar amino acids such as valine, to avoid such errors it has two additional distinct tRNA(Ile)-dependent editing activities. One activity is designated as 'pretransfer' editing and involves the hydrolysis of activated Val-AMP. The other activity is designated 'posttransfer' editing and involves deacylation of mischarged Val-tRNA(Ile). The polypeptide is Isoleucine--tRNA ligase (Cupriavidus metallidurans (strain ATCC 43123 / DSM 2839 / NBRC 102507 / CH34) (Ralstonia metallidurans)).